A 140-amino-acid polypeptide reads, in one-letter code: Encapsulated ferritin-like protein (140 aa).

Ca(2+) is bound at residue Glu31. Glu32 is a Fe cation binding site. A Ca(2+)-binding site is contributed by Glu34. Residues Glu62 and His65 each coordinate Fe cation. The disordered stretch occupies residues 100-140 (ADTAGEGSGGDAAKGATAQGDGSLGIGSLKGEAALARPPRL). The tract at residues 100–140 (ADTAGEGSGGDAAKGATAQGDGSLGIGSLKGEAALARPPRL) is targeting peptide.

This sequence belongs to the ferritin-like superfamily. EncFtn family. In terms of assembly, monomers form antiparallel dimers which assemble in a decameric ring 7 nm in diameter and 4.5 nm thick with a central channel (construct without targeting peptide). Growth in Fe(2+)-rich medium induces oligomerization, the monomer does not bind metals. The target peptide probably extends away from the ring, to allow binding to the interior of the encapsulin nanocompartment shell. Requires Fe(2+) as cofactor. The cofactor is Ca(2+).

Its subcellular location is the encapsulin nanocompartment. It catalyses the reaction 4 Fe(2+) + O2 + 4 H(+) = 4 Fe(3+) + 2 H2O. Ferroxidase activity inhibited by Zn(2+). Mutants at Glu-31, Glu-34 and Trp-38 are also inhibited by Zn(2+). In terms of biological role, cargo protein of a type 1 encapsulin nanocompartment. A ferritin-like ferroxidase that mineralizes iron inside the encapsulin nanocompartment. Converts Fe(2+) to Fe(3+) that is released to the exterior of the decameric complex for deposition in the encapsulin nanocompartment. In solution the decamer binds 10-15 iron cations; in the encapsulin nanocompartment the decamer can bind up to 48 ions, perhaps via its internal channel and on its exterior. The empty encapsulin nanocompartment sequesters about 2200 Fe ions while the cargo-loaded nanocompartment can maximally sequester about 4150 Fe ions. EncFtn retains ferroxidase activity when encapsulated. Flux in the active site di-iron metal center is thought to be controlled by the 'entry site' of the protein, which both attracts metal and controls the rate of iron oxidation. Encapsulation in the nanocompartment does not alter either function of this protein. In Rhodospirillum rubrum (strain ATCC 11170 / ATH 1.1.1 / DSM 467 / LMG 4362 / NCIMB 8255 / S1), this protein is Encapsulated ferritin-like protein.